Consider the following 599-residue polypeptide: MEQQSENVYFSGSESESLSDSESRAQPQNQNSDNSRSASLTPPDSSDLEDYVDSDSETSSSLVNAPKRIKIIRSPSTSNWPRRLTSDDNGSDDDSEDEDESNDEQDLVESEEEDQRSRSSSRSAMDISSEEDSGDDEPSFTLTELPGDVPDFKVYNRNIAIFSIKYLNQFGRLNAGIQETDFPTAKLVNTNRHVVVWINMLENDTTPVTPDSFDSFNLSGAIILKDSSGLIEYMYVHKNSRTVKSLLLDAIATIYNQVTGNDILINIWTQNINIDEDVRFLVNYGFVEPAIVGKNTIQMKYHPKIPHQQTLNEIRRLLGYSKRNVGWINVFLPKDLAIKLFSYVNNYDVEFGGYLPLTSVQKPNGAWVLGWDDTLVSKGESLSVYIPPPQEHQKLEETIIGFHTHPIALSSSNTISDGMVILPPSNIDLKGISNQWLFPRPNIAHFICSPEGLWVVSLTEEFQSLLMGLRDLGEVAWPCINMILFVIFESMFQQHDQKFNYPTVTPITKWFELTDVQDLIKNLTLKRCFNYLNIPMEKFEATCQTISGYQNVRLYDISYNKWESFSALPDEGLYFTFYYKYDDFTGYPRQKSLTTEASN.

Residues 1 to 10 (MEQQSENVYF) show a composition bias toward polar residues. The interval 1–146 (MEQQSENVYF…EPSFTLTELP (146 aa)) is disordered. Low complexity predominate over residues 11–20 (SGSESESLSD). Over residues 24–44 (RAQPQNQNSDNSRSASLTPPD) the composition is skewed to polar residues. Acidic residues-rich tracts occupy residues 46 to 56 (SDLEDYVDSDS) and 89 to 114 (NGSDDDSEDEDESNDEQDLVESEEED). Residues 118–127 (RSSSRSAMDI) are compositionally biased toward low complexity. The segment covering 128 to 138 (SSEEDSGDDEP) has biased composition (acidic residues).

Belongs to the IIV-6 229L family.

This is an uncharacterized protein from Aedes vexans (Inland floodwater mosquito).